The following is a 766-amino-acid chain: Subtilisin-like protease SBT4.15 (766 aa).

The N-terminal stretch at 1–23 (MVSNQRVRLFMLCFCLVNNAVIA) is a signal peptide. A propeptide spans 24–113 (ATEDENVERK…VFKNTQRQLH (90 aa)) (activation peptide). The region spanning 35 to 113 (YIVYMGEATE…VFKNTQRQLH (79 aa)) is the Inhibitor I9 domain. The 485-residue stretch at 117–601 (SWDFLGLVES…SGQINPRRAI (485 aa)) folds into the Peptidase S8 domain. Asp144 functions as the Charge relay system in the catalytic mechanism. A glycan (N-linked (GlcNAc...) asparagine) is linked at Asn175. His210 (charge relay system) is an active-site residue. 3 N-linked (GlcNAc...) asparagine glycosylation sites follow: Asn233, Asn376, and Asn465. Residues 365-460 (MYPLTSGSLA…YVFFEDGTKI (96 aa)) enclose the PA domain. Residue Ser543 is the Charge relay system of the active site. 3 N-linked (GlcNAc...) asparagine glycosylation sites follow: Asn624, Asn638, and Asn668.

This sequence belongs to the peptidase S8 family. In terms of processing, the C-terminal propeptide is autocleaved.

Its subcellular location is the secreted. The sequence is that of Subtilisin-like protease SBT4.15 from Arabidopsis thaliana (Mouse-ear cress).